A 95-amino-acid chain; its full sequence is Large ribosomal subunit protein bL25 (95 aa).

Belongs to the bacterial ribosomal protein bL25 family. As to quaternary structure, part of the 50S ribosomal subunit; part of the 5S rRNA/L5/L18/L25 subcomplex. Contacts the 5S rRNA. Binds to the 5S rRNA independently of L5 and L18.

In terms of biological role, this is one of the proteins that binds to the 5S RNA in the ribosome where it forms part of the central protuberance. The protein is Large ribosomal subunit protein bL25 of Buchnera aphidicola subsp. Acyrthosiphon pisum (strain 5A).